Reading from the N-terminus, the 101-residue chain is Small ribosomal subunit protein uS14 (101 aa).

The protein belongs to the universal ribosomal protein uS14 family. As to quaternary structure, part of the 30S ribosomal subunit. Contacts proteins S3 and S10.

Its function is as follows. Binds 16S rRNA, required for the assembly of 30S particles and may also be responsible for determining the conformation of the 16S rRNA at the A site. The polypeptide is Small ribosomal subunit protein uS14 (Francisella tularensis subsp. tularensis (strain FSC 198)).